A 357-amino-acid polypeptide reads, in one-letter code: Sorbitol dehydrogenase (357 aa).

At Ala2 the chain carries N-acetylalanine. Cys45 serves as a coordination point for Zn(2+). Tyr51 contributes to the substrate binding site. Residues His70, Glu71, and Glu156 each contribute to the Zn(2+) site. Residue Glu156 coordinates substrate. Ser169 carries the phosphoserine modification. Residues Ile184, Asp204, Arg209, 273–275 (VGM), and 297–299 (VFR) contribute to the NAD(+) site. Substrate is bound by residues Arg299 and Tyr300.

Belongs to the zinc-containing alcohol dehydrogenase family. Homotetramer; dimer of dimers. Zn(2+) is required as a cofactor. As to expression, expressed in liver and testis.

It is found in the mitochondrion membrane. It localises to the cell projection. The protein resides in the cilium. The protein localises to the flagellum. The catalysed reaction is keto-D-fructose + NADH + H(+) = D-sorbitol + NAD(+). It carries out the reaction xylitol + NAD(+) = D-xylulose + NADH + H(+). It catalyses the reaction L-iditol + NAD(+) = keto-L-sorbose + NADH + H(+). Polyol dehydrogenase that catalyzes the reversible NAD(+)-dependent oxidation of various sugar alcohols. Is active with D-sorbitol (D-glucitol) leading to the C2-oxidized product D-fructose. Is a key enzyme in the polyol pathway that interconverts glucose and fructose via sorbitol, which constitutes an important alternate route for glucose metabolism. May play a role in sperm motility by using sorbitol as an alternative energy source for sperm motility. In Rattus norvegicus (Rat), this protein is Sorbitol dehydrogenase (Sord).